Consider the following 121-residue polypeptide: Apoptin (121 aa).

Disordered stretches follow at residues 1–28 and 57–121; these read MNAL…LETP and LRSA…CIRL. The span at 58-70 shows a compositional bias: polar residues; it reads RSATADNSESTGF. Over residues 88-102 the composition is skewed to basic and acidic residues; that stretch reads RSCDPSEYRVSELKE.

The protein belongs to the gyrovirus apoptin family.

It is found in the host nucleus. Its function is as follows. May act as transcriptional regulator. Induces apoptosis in infected cells. Element of infectious replication cycle. This chain is Apoptin (VP3), found in Gallus gallus (Chicken).